Here is a 278-residue protein sequence, read N- to C-terminus: Large ribosomal subunit protein uL2 (278 aa).

Disordered regions lie at residues 28-56 (KPVK…GIAG) and 221-278 (RGVA…KKKR). A compositionally biased stretch (basic residues) spans 269–278 (IRSRHAKKKR).

This sequence belongs to the universal ribosomal protein uL2 family. Part of the 50S ribosomal subunit. Forms a bridge to the 30S subunit in the 70S ribosome.

Its function is as follows. One of the primary rRNA binding proteins. Required for association of the 30S and 50S subunits to form the 70S ribosome, for tRNA binding and peptide bond formation. It has been suggested to have peptidyltransferase activity; this is somewhat controversial. Makes several contacts with the 16S rRNA in the 70S ribosome. This is Large ribosomal subunit protein uL2 from Rhizorhabdus wittichii (strain DSM 6014 / CCUG 31198 / JCM 15750 / NBRC 105917 / EY 4224 / RW1) (Sphingomonas wittichii).